The primary structure comprises 397 residues: Succinyl-diaminopimelate desuccinylase (397 aa).

Histidine 73 contributes to the Zn(2+) binding site. Aspartate 75 is a catalytic residue. Aspartate 106 contacts Zn(2+). Glutamate 140 serves as the catalytic Proton acceptor. Zn(2+)-binding residues include glutamate 141, glutamate 169, and histidine 366.

The protein belongs to the peptidase M20A family. DapE subfamily. As to quaternary structure, homodimer. Requires Zn(2+) as cofactor. Co(2+) is required as a cofactor.

It carries out the reaction N-succinyl-(2S,6S)-2,6-diaminopimelate + H2O = (2S,6S)-2,6-diaminopimelate + succinate. It participates in amino-acid biosynthesis; L-lysine biosynthesis via DAP pathway; LL-2,6-diaminopimelate from (S)-tetrahydrodipicolinate (succinylase route): step 3/3. Functionally, catalyzes the hydrolysis of N-succinyl-L,L-diaminopimelic acid (SDAP), forming succinate and LL-2,6-diaminopimelate (DAP), an intermediate involved in the bacterial biosynthesis of lysine and meso-diaminopimelic acid, an essential component of bacterial cell walls. The sequence is that of Succinyl-diaminopimelate desuccinylase from Rhizobium etli (strain ATCC 51251 / DSM 11541 / JCM 21823 / NBRC 15573 / CFN 42).